Consider the following 510-residue polypeptide: NAD(P)H-quinone oxidoreductase subunit 2 A, chloroplastic (510 aa).

The next 13 helical transmembrane spans lie at 24–44 (LLLF…GLIL), 57–77 (MPWL…ALLF), 99–119 (IFQF…VEYI), 124–144 (MAIT…MFLC), 149–169 (LITI…LSGY), 183–203 (YLLM…WLYG), 227–247 (PGIS…LSPA), 295–315 (WHLL…LIAI), 323–343 (MLAY…IVGD), 354–374 (YMLF…LFGL), 395–415 (ALSL…AGFF), 418–438 (LHLF…IGLL), and 482–502 (LSMI…SPII).

It belongs to the complex I subunit 2 family. As to quaternary structure, NDH is composed of at least 16 different subunits, 5 of which are encoded in the nucleus.

It is found in the plastid. Its subcellular location is the chloroplast thylakoid membrane. The catalysed reaction is a plastoquinone + NADH + (n+1) H(+)(in) = a plastoquinol + NAD(+) + n H(+)(out). The enzyme catalyses a plastoquinone + NADPH + (n+1) H(+)(in) = a plastoquinol + NADP(+) + n H(+)(out). Functionally, NDH shuttles electrons from NAD(P)H:plastoquinone, via FMN and iron-sulfur (Fe-S) centers, to quinones in the photosynthetic chain and possibly in a chloroplast respiratory chain. The immediate electron acceptor for the enzyme in this species is believed to be plastoquinone. Couples the redox reaction to proton translocation, and thus conserves the redox energy in a proton gradient. The protein is NAD(P)H-quinone oxidoreductase subunit 2 A, chloroplastic of Populus trichocarpa (Western balsam poplar).